A 33-amino-acid polypeptide reads, in one-letter code: Beta-amanitin proprotein (33 aa).

The propeptide occupies 1–10 (MSDINATRLP). The segment at residues 11–18 (IWGIGCDP) is a cross-link (cyclopeptide (Ile-Pro)). The segment at residues 12–16 (WGIGC) is a cross-link (2'-cysteinyl-6'-hydroxytryptophan sulfoxide (Trp-Cys)). Positions 19 to 33 (CVGDDVAALTTRGEA) are excised as a propeptide.

This sequence belongs to the MSDIN fungal toxin family. Processed by the macrocyclase-peptidase enzyme POPB to yield a toxic cyclic decapeptide. POPB first removes 10 residues from the N-terminus. Conformational trapping of the remaining peptide forces the enzyme to release this intermediate rather than proceed to macrocyclization. The enzyme rebinds the remaining peptide in a different conformation and catalyzes macrocyclization of the N-terminal 8 residues.

Functionally, toxin belonging to the bicyclic octapeptides amatoxins that acts by binding non-competitively to RNA polymerase II and greatly slowing the elongation of transcripts from target promoters. This is Beta-amanitin proprotein from Amanita rimosa.